Consider the following 539-residue polypeptide: 2-isopropylmalate synthase (539 aa).

Residues 8 to 269 (VLIFDTTLRD…YFNPFFGRPP (262 aa)) enclose the Pyruvate carboxyltransferase domain. Mn(2+) contacts are provided by aspartate 17, histidine 208, histidine 210, and asparagine 244. Residues 408-539 (QLKLVQVSCG…DLAKVEKKGI (132 aa)) are regulatory domain.

The protein belongs to the alpha-IPM synthase/homocitrate synthase family. LeuA type 1 subfamily. In terms of assembly, homodimer. The cofactor is Mn(2+).

It localises to the cytoplasm. It catalyses the reaction 3-methyl-2-oxobutanoate + acetyl-CoA + H2O = (2S)-2-isopropylmalate + CoA + H(+). It functions in the pathway amino-acid biosynthesis; L-leucine biosynthesis; L-leucine from 3-methyl-2-oxobutanoate: step 1/4. Its function is as follows. Catalyzes the condensation of the acetyl group of acetyl-CoA with 3-methyl-2-oxobutanoate (2-ketoisovalerate) to form 3-carboxy-3-hydroxy-4-methylpentanoate (2-isopropylmalate). This chain is 2-isopropylmalate synthase, found in Prochlorococcus marinus (strain NATL2A).